The chain runs to 663 residues: Alcohol oxidase (663 aa).

FAD is bound at residue 8–39 (DVIVCGGGSTGCVIAGRLANVDENLKVLLIEN). The Proton acceptor role is filled by His-567. A Microbody targeting signal motif is present at residues 661–663 (ARY).

This sequence belongs to the GMC oxidoreductase family. Homooctamer. Requires FAD as cofactor.

The protein localises to the peroxisome matrix. It catalyses the reaction a primary alcohol + O2 = an aldehyde + H2O2. It participates in energy metabolism; methane degradation. Catalyzes the oxidation of methanol to formaldehyde and hydrogen peroxide, the first step in the methanol utilization pathway of methylotrophic yeasts. This chain is Alcohol oxidase (AOD1), found in Candida boidinii (Yeast).